Reading from the N-terminus, the 297-residue chain is Protein phosphatase PTC7 homolog (297 aa).

The transit peptide at 1 to 27 (MFSVLSCGRLVARAVFGGLSQTDSRDY) directs the protein to the mitochondrion. Positions 28 to 292 (SLVTASCGFG…DDITVLLSIV (265 aa)) constitute a PPM-type phosphatase domain. Mn(2+) contacts are provided by Asp-71, Gly-72, and Asp-216.

It belongs to the PP2C family. Requires Mg(2+) as cofactor. The cofactor is Mn(2+).

It localises to the mitochondrion matrix. The enzyme catalyses O-phospho-L-seryl-[protein] + H2O = L-seryl-[protein] + phosphate. It carries out the reaction O-phospho-L-threonyl-[protein] + H2O = L-threonyl-[protein] + phosphate. Functionally, protein phosphatase which positively regulates biosynthesis of the ubiquinone, coenzyme Q. Dephosphorylates the ubiquinone biosynthesis protein coq7 which is likely to lead to its activation. The protein is Protein phosphatase PTC7 homolog (pptc7) of Xenopus laevis (African clawed frog).